Reading from the N-terminus, the 198-residue chain is Inosine triphosphate pyrophosphatase (198 aa).

Residue A2 is modified to N-acetylalanine. 14–19 (TGNAKK) lines the ITP pocket. E44 is a binding site for Mg(2+). ITP contacts are provided by residues K56, 72–73 (DT), and K89. Position 146 is a phosphoserine (S146). ITP-binding positions include 149–152 (FGWD), K172, and 177–178 (HR).

It belongs to the HAM1 NTPase family. In terms of assembly, homodimer. Requires Mg(2+) as cofactor. It depends on Mn(2+) as a cofactor.

It is found in the cytoplasm. It carries out the reaction ITP + H2O = IMP + diphosphate + H(+). It catalyses the reaction dITP + H2O = dIMP + diphosphate + H(+). The enzyme catalyses XTP + H2O = XMP + diphosphate + H(+). The catalysed reaction is N(6)-hydroxy-dATP + H2O = N(6)-hydroxy-dAMP + diphosphate + H(+). Functionally, pyrophosphatase that hydrolyzes the non-canonical purine nucleotides inosine triphosphate (ITP), deoxyinosine triphosphate (dITP) as well as 2'-deoxy-N-6-hydroxylaminopurine triphosphate (dHAPTP) and xanthosine 5'-triphosphate (XTP) to their respective monophosphate derivatives. The enzyme does not distinguish between the deoxy- and ribose forms. Probably excludes non-canonical purines from RNA and DNA precursor pools, thus preventing their incorporation into RNA and DNA and avoiding chromosomal lesions. The sequence is that of Inosine triphosphate pyrophosphatase (Itpa) from Mus musculus (Mouse).